Reading from the N-terminus, the 440-residue chain is 2-methylisoborneol synthase (440 aa).

Disordered regions lie at residues 1-33 (MPDS…IPSA) and 46-74 (LHPP…TVTG). Pro residues-rich tracts occupy residues 9 to 29 (TPPP…PAPV) and 50 to 63 (VTVP…PPAP). The Mg(2+) site is built by Asp197, Asp198, Glu202, Asn345, Ser349, and Glu353.

It belongs to the terpene synthase family. 2-methylisoborneol synthase subfamily. Mg(2+) serves as cofactor.

It catalyses the reaction (E)-2-methylgeranyl diphosphate + H2O = 2-methylisoborneol + diphosphate. Catalyzes the cyclization of 2-methylgeranyl diphosphate (2-MeGPP) to 2-methylisoborneol (2-MIB), which likely involves the intermediacy of 2-methyllinalyl diphosphate. Is also able to catalyze the cyclization of geranyl diphosphate (GPP), albeit with much lower efficiency, leading to the formation of a complex mixture of cyclic monoterpenes, consisting of alpha-pinene (6%), beta-pinene (23%), limonene (32%), gamma-terpinene (29%), and delta-terpinene (10%). The sequence is that of 2-methylisoborneol synthase from Streptomyces coelicolor (strain ATCC BAA-471 / A3(2) / M145).